A 236-amino-acid chain; its full sequence is Terpene cyclase andB (236 aa).

7 consecutive transmembrane segments (helical) span residues 13–33 (TVVN…YILM), 45–65 (MSML…ILCP), 70–90 (VVRP…YAAI), 106–126 (HLPL…IALI), 135–155 (FLWS…FQLL), 166–186 (VLWL…TLMW), and 200–220 (LTAY…VVFY).

Belongs to the paxB family.

It localises to the membrane. It functions in the pathway secondary metabolite biosynthesis; terpenoid biosynthesis. Functionally, terpene cyclase; part of the gene cluster that mediates the biosynthesis of anditomin, a fungal meroterpenoid. The first step of the pathway is the synthesis of 3,5-dimethylorsellinic acid (DMOA) by the polyketide synthase andM. DMOA is then converted to the phthalide compound 5,7-dihydroxy-4,6-dimethylphthalide (DHDMP) by the cytochrome P450 monooxygenase andK, which is further prenylated by the prenyltransferase andD to yield farnesyl-DHDMP. Further epoxidation by the FAD-dependent monooxygenase andE leads to epoxyfarnesyl-DHDMP. The next step involves the terpene cyclase andB that converts epoxyfarnesyl-DHDMP into preandiloid A through opening of the epoxide ring followed by the cyclization of the farnesyl moiety. Preandiloid A is in turn oxidized at the C-3 hydroxyl group to yield preandiloid B by the dehydrogenase andC. The dioxygenase andA is solely responsible for the dehydrogenation of preandiloid B leading to the enone preandiloid C, as well as for the intriguing structural rearrangement to generate the bicyclo[2.2.2]octane core, transforming preandiloid C into andiconin. FAD-binding monooxygenase andJ then produces andilesin D which is reduced by dehydrogenase andI to yield andilesin A. Action of acetyltransferase andG followed by a spontaneous acetate elimination leads then to andilesin B, which is in turn substrate of the short chain dehydrogenase andH to yield andilesin C. Finally, the dioxygenase andF catalyzes the transformation of andilesin C to anditomin. The polypeptide is Terpene cyclase andB (Emericella variicolor (Aspergillus stellatus)).